A 148-amino-acid polypeptide reads, in one-letter code: Large ribosomal subunit protein uL15 (148 aa).

Residues 1–30 show a composition bias toward basic residues; sequence MPSRLRKTRKLRGHVSHGHGRIGKHRKHPG. A disordered region spans residues 1–37; sequence MPSRLRKTRKLRGHVSHGHGRIGKHRKHPGGRGNAGG. Histidine 39 bears the (3S)-3-hydroxyhistidine mark. Residues lysine 47 and lysine 55 each carry the N6-acetyllysine modification. Position 68 is a phosphoserine (serine 68). Lysine 110 is subject to N6-acetyllysine.

This sequence belongs to the universal ribosomal protein uL15 family. In terms of assembly, component of the large ribosomal subunit. In terms of processing, hydroxylated on His-39 by MINA.

The protein localises to the cytoplasm. In terms of biological role, component of the large ribosomal subunit. The ribosome is a large ribonucleoprotein complex responsible for the synthesis of proteins in the cell. The protein is Large ribosomal subunit protein uL15 (Rpl27a) of Rattus norvegicus (Rat).